The primary structure comprises 666 residues: Pentatricopeptide repeat-containing protein At1g64100 (666 aa).

15 PPR repeats span residues 105–139 (TAVDCNKVIGVFVRMNRPDVAISLYRKMEIRRIPL), 140–174 (NIYSFNILIKCFCDCHKLSFSLSTFGKLTKLGFQP), 175–209 (DVVTFNTLLHGLCLEDRISEALALFGYMVETGFLE), 225–259 (VVITFNTLINGLCLEGRVLEAAALVNKMVGKGLHI), 260–294 (DVVTYGTIVNGMCKMGDTKSALNLLSKMEETHIKP), 295–329 (DVVIYSAIIDRLCKDGHHSDAQYLFSEMLEKGIAP), 330–364 (NVFTYNCMIDGFCSFGRWSDAQRLLRDMIEREINP), 365–399 (DVLTFNALISASVKEGKLFEAEKLCDEMLHRCIFP), 400–430 (DTVTYNSMIYGFCKHNRFDDAKHMFDLMASP), 431–465 (DVVTFNTIIDVYCRAKRVDEGMQLLREISRRGLVA), 466–500 (NTTTYNTLIHGFCEVDNLNAAQDLFQEMISHGVCP), 501–535 (DTITCNILLYGFCENEKLEEALELFEVIQMSKIDL), 536–570 (DTVAYNIIIHGMCKGSKVDEAWDLFCSLPIHGVEP), 571–605 (DVQTYNVMISGFCGKSAISDANVLFHKMKDNGHEP), and 606–640 (DNSTYNTLIRGCLKAGEIDKSIELISEMRSNGFSG).

This sequence belongs to the PPR family. P subfamily.

This chain is Pentatricopeptide repeat-containing protein At1g64100, found in Arabidopsis thaliana (Mouse-ear cress).